A 420-amino-acid polypeptide reads, in one-letter code: uncharacterized protein (420 aa).

A YcaO domain is found at 79–420; the sequence is GKGIDNEAAM…AVNTIRGAES (342 aa).

This is an uncharacterized protein from Rhizobium leguminosarum bv. trifolii.